Consider the following 128-residue polypeptide: Large ribosomal subunit protein bL12 (128 aa).

The protein belongs to the bacterial ribosomal protein bL12 family. Homodimer. Part of the ribosomal stalk of the 50S ribosomal subunit. Forms a multimeric L10(L12)X complex, where L10 forms an elongated spine to which 2 to 4 L12 dimers bind in a sequential fashion. Binds GTP-bound translation factors.

In terms of biological role, forms part of the ribosomal stalk which helps the ribosome interact with GTP-bound translation factors. Is thus essential for accurate translation. This is Large ribosomal subunit protein bL12 from Picosynechococcus sp. (strain ATCC 27264 / PCC 7002 / PR-6) (Agmenellum quadruplicatum).